The chain runs to 357 residues: Dihydroorotate dehydrogenase (quinone) (357 aa).

FMN contacts are provided by residues 66–70 (AGFDK) and threonine 90. Lysine 70 serves as a coordination point for substrate. A substrate-binding site is contributed by 115–119 (NRMGF). Positions 143 and 176 each coordinate FMN. Substrate is bound at residue asparagine 176. The active-site Nucleophile is serine 179. Residue asparagine 181 coordinates substrate. 2 residues coordinate FMN: lysine 212 and threonine 240. Position 241-242 (241-242 (NT)) interacts with substrate. FMN contacts are provided by residues glycine 264, glycine 293, and 314–315 (YT).

The protein belongs to the dihydroorotate dehydrogenase family. Type 2 subfamily. Monomer. The cofactor is FMN.

It localises to the cell membrane. The enzyme catalyses (S)-dihydroorotate + a quinone = orotate + a quinol. It participates in pyrimidine metabolism; UMP biosynthesis via de novo pathway; orotate from (S)-dihydroorotate (quinone route): step 1/1. In terms of biological role, catalyzes the conversion of dihydroorotate to orotate with quinone as electron acceptor. This chain is Dihydroorotate dehydrogenase (quinone), found in Mycobacterium bovis (strain BCG / Pasteur 1173P2).